Consider the following 220-residue polypeptide: Inner kinetochore subunit fta3 (220 aa).

Belongs to the CENP-H/MCM16 family. In terms of assembly, component of the inner kinetochore constitutive centromere-associated network (CCAN) (also known as central kinetochore Sim4 complex in fission yeast), which is composed of at least cnl2, cnp3, cnp20, fta1, fta2, fta3, fta4, fta6, fta7, mal2, mhf1, mhf2, mis6, mis15, mis17, sim4 and wip1.

It localises to the nucleus. It is found in the chromosome. The protein resides in the centromere. The protein localises to the kinetochore. Component of the kinetochore, a multiprotein complex that assembles on centromeric DNA and attaches chromosomes to spindle microtubules, mediating chromosome segregation and sister chromatid segregation during meiosis and mitosis. Component of the inner kinetochore constitutive centromere-associated network (CCAN), which serves as a structural platform for outer kinetochore assembly. Fta2, fta3 and fta4 associate with the central core (cnt) and inner repeat (inr) region of the centromere. This chain is Inner kinetochore subunit fta3 (fta3), found in Schizosaccharomyces pombe (strain 972 / ATCC 24843) (Fission yeast).